The chain runs to 362 residues: Glucuronokinase 1 (362 aa).

Residue 126 to 136 coordinates ATP; the sequence is PRQTGLSGSSA. The Proton acceptor role is filled by Asp-179.

This sequence belongs to the GHMP kinase family. Mg(2+) is required as a cofactor. It depends on Mn(2+) as a cofactor. Co(2+) serves as cofactor. As to expression, highly expressed in pollen. Detected in seedlings, inflorescences, seeds, leaves and roots.

It carries out the reaction D-glucuronate + ATP = 1-phospho-alpha-D-glucuronate + ADP + H(+). In terms of biological role, sugar-1-kinase with a strict substrate specificity for D-glucuronic acid and ATP. Involved in the biosynthesis of UDP-glucuronic acid (UDP-GlcA), providing nucleotide sugars for cell-wall polymers. May be also involved in a salvage pathway for glucuronic acid. This chain is Glucuronokinase 1 (GLCAK1), found in Arabidopsis thaliana (Mouse-ear cress).